The sequence spans 383 residues: Processive diacylglycerol beta-glucosyltransferase (383 aa).

Belongs to the glycosyltransferase 28 family. UgtP subfamily.

The protein resides in the cell membrane. The enzyme catalyses a 1,2-diacyl-3-O-(beta-D-glucopyranosyl)-sn-glycerol + UDP-alpha-D-glucose = a 1,2-diacyl-3-O-(beta-D-Glc-(1-&gt;6)-beta-D-Glc)-sn-glycerol + UDP + H(+). It catalyses the reaction a 1,2-diacyl-3-O-(beta-D-Glc-(1-&gt;6)-beta-D-Glc)-sn-glycerol + UDP-alpha-D-glucose = a 1,2-diacyl-3-O-(beta-D-Glc-(1-&gt;6)-beta-D-Glc-(1-&gt;6)-beta-D-Glc)-sn-glycerol + UDP + H(+). It carries out the reaction a 1,2-diacyl-sn-glycerol + UDP-alpha-D-glucose = a 1,2-diacyl-3-O-(beta-D-glucopyranosyl)-sn-glycerol + UDP + H(+). Its pathway is glycolipid metabolism; diglucosyl-diacylglycerol biosynthesis. Its function is as follows. Processive glucosyltransferase involved in the biosynthesis of both the bilayer- and non-bilayer-forming membrane glucolipids. Is able to successively transfer up to three glucosyl residues to diacylglycerol (DAG), thereby catalyzing the formation of beta-monoglucosyl-DAG (3-O-(beta-D-glucopyranosyl)-1,2-diacyl-sn-glycerol), beta-diglucosyl-DAG (3-O-(beta-D-glucopyranosyl-beta-(1-&gt;6)-D-glucopyranosyl)-1,2-diacyl-sn-glycerol) and beta-triglucosyl-DAG (3-O-(beta-D-glucopyranosyl-beta-(1-&gt;6)-D-glucopyranosyl-beta-(1-&gt;6)-D-glucopyranosyl)-1,2-diacyl-sn-glycerol). Beta-diglucosyl-DAG is the predominant glycolipid found in Bacillales and is also used as a membrane anchor for lipoteichoic acid (LTA). This chain is Processive diacylglycerol beta-glucosyltransferase, found in Bacillus licheniformis (strain ATCC 14580 / DSM 13 / JCM 2505 / CCUG 7422 / NBRC 12200 / NCIMB 9375 / NCTC 10341 / NRRL NRS-1264 / Gibson 46).